Consider the following 358-residue polypeptide: Transcriptional repressor protein KorB (358 aa).

Over residues 1–42 the composition is skewed to low complexity; sequence MTAAQAKTTKKNTAAAAQEAAGAAQPSGLGLDSIGDLSSLLD. Disordered regions lie at residues 1-79 and 256-305; these read MTAA…FSPE and DPNT…DKLK. A compositionally biased stretch (acidic residues) spans 275-285; it reads AGDGQDGEDGD. A compositionally biased stretch (basic and acidic residues) spans 286-305; sequence QDGKDAKEKGAKEPDPDKLK.

The protein belongs to the ParB family.

In terms of biological role, in conjunction with KorA, inhibits the transcription of the kilA, trfA and korAB operons. Is also involved in the negative control of the kilB operon. In Escherichia coli, this protein is Transcriptional repressor protein KorB (korB).